The primary structure comprises 911 residues: Protein translocase subunit SecA (911 aa).

ATP contacts are provided by residues Gln-87, 105–109, and Asp-512; that span reads GEGKT. The interval 865-892 is disordered; the sequence is AAEQDGAEEGAVATATAPVRSENKVGRN. A compositionally biased stretch (low complexity) spans 873-883; the sequence is EGAVATATAPV. Zn(2+)-binding residues include Cys-895, Cys-897, Cys-906, and His-907.

Belongs to the SecA family. Monomer and homodimer. Part of the essential Sec protein translocation apparatus which comprises SecA, SecYEG and auxiliary proteins SecDF-YajC and YidC. Zn(2+) serves as cofactor.

The protein resides in the cell inner membrane. It localises to the cytoplasm. The enzyme catalyses ATP + H2O + cellular proteinSide 1 = ADP + phosphate + cellular proteinSide 2.. Functionally, part of the Sec protein translocase complex. Interacts with the SecYEG preprotein conducting channel. Has a central role in coupling the hydrolysis of ATP to the transfer of proteins into and across the cell membrane, serving both as a receptor for the preprotein-SecB complex and as an ATP-driven molecular motor driving the stepwise translocation of polypeptide chains across the membrane. The sequence is that of Protein translocase subunit SecA from Ectopseudomonas mendocina (strain ymp) (Pseudomonas mendocina).